The chain runs to 430 residues: Asparagine--tRNA ligase (430 aa).

The protein belongs to the class-II aminoacyl-tRNA synthetase family. As to quaternary structure, homodimer.

Its subcellular location is the cytoplasm. The enzyme catalyses tRNA(Asn) + L-asparagine + ATP = L-asparaginyl-tRNA(Asn) + AMP + diphosphate + H(+). The polypeptide is Asparagine--tRNA ligase (Staphylococcus aureus (strain JH1)).